The primary structure comprises 804 residues: Enhancer of polycomb homolog 2 (804 aa).

Disordered stretches follow at residues Gln372–Pro395, Gly484–Cys508, Gln603–Met624, and Pro646–Ser669. 2 stretches are compositionally biased toward polar residues: residues Ser611–Met624 and Asp654–Ser669.

It belongs to the enhancer of polycomb family.

The protein resides in the nucleus. May play a role in transcription or DNA repair. This Xenopus laevis (African clawed frog) protein is Enhancer of polycomb homolog 2 (epc2).